The chain runs to 476 residues: Casein kinase 1-like protein 7 (476 aa).

Residues 9-278 (FKLGKKIGSG…LKRLFRDLFI (270 aa)) enclose the Protein kinase domain. ATP contacts are provided by residues 15–23 (IGSGSFGEL) and K38. Catalysis depends on D128, which acts as the Proton acceptor. Disordered stretches follow at residues 299–324 (GSSS…DPIE) and 340–464 (PGAV…TRED). Positions 357–367 (PRDRSRSRNSD) are enriched in basic and acidic residues. Residues 382 to 422 (ANSSSRYRASSSRKAVAASSSRPSSAGGPSESRTSSRLVSS) show a composition bias toward low complexity. Residues 423–432 (SGGGGSGSGN) show a composition bias toward gly residues.

It belongs to the protein kinase superfamily. CK1 Ser/Thr protein kinase family. Casein kinase I subfamily. In terms of assembly, monomer. Post-translationally, autophosphorylated.

It localises to the cytoplasm. It catalyses the reaction L-seryl-[protein] + ATP = O-phospho-L-seryl-[protein] + ADP + H(+). It carries out the reaction L-threonyl-[protein] + ATP = O-phospho-L-threonyl-[protein] + ADP + H(+). Its function is as follows. Casein kinases are operationally defined by their preferential utilization of acidic proteins such as caseins as substrates. It can phosphorylate a large number of proteins. The sequence is that of Casein kinase 1-like protein 7 from Arabidopsis thaliana (Mouse-ear cress).